The primary structure comprises 240 residues: Serine protease SplB (240 aa).

An N-terminal signal peptide occupies residues 1 to 36 (MNKNVVIKSLAALTILTSVTGIGITLVEEVQQTAKA). Active-site charge relay system residues include histidine 75, aspartate 113, and serine 193.

Belongs to the peptidase S1B family.

The protein resides in the secreted. Serine protease that cleaves specifically after the sequence Trp-Glu-Leu-Gln. In Staphylococcus aureus (strain MW2), this protein is Serine protease SplB (splB).